The primary structure comprises 463 residues: Cysteine--tRNA ligase (463 aa).

Position 29 (Cys29) interacts with Zn(2+). A 'HIGH' region motif is present at residues 31-41 (ATPQTQPHIGH). Residues Cys212, His237, and Glu241 each contribute to the Zn(2+) site. The 'KMSKS' region signature appears at 268 to 272 (KMSKS). Lys271 provides a ligand contact to ATP.

This sequence belongs to the class-I aminoacyl-tRNA synthetase family. In terms of assembly, monomer. It depends on Zn(2+) as a cofactor.

Its subcellular location is the cytoplasm. The catalysed reaction is tRNA(Cys) + L-cysteine + ATP = L-cysteinyl-tRNA(Cys) + AMP + diphosphate. This chain is Cysteine--tRNA ligase, found in Corynebacterium diphtheriae (strain ATCC 700971 / NCTC 13129 / Biotype gravis).